Reading from the N-terminus, the 885-residue chain is Alanine--tRNA ligase (885 aa).

H569, H573, C672, and H676 together coordinate Zn(2+).

This sequence belongs to the class-II aminoacyl-tRNA synthetase family. Zn(2+) is required as a cofactor.

The protein localises to the cytoplasm. The enzyme catalyses tRNA(Ala) + L-alanine + ATP = L-alanyl-tRNA(Ala) + AMP + diphosphate. Its function is as follows. Catalyzes the attachment of alanine to tRNA(Ala) in a two-step reaction: alanine is first activated by ATP to form Ala-AMP and then transferred to the acceptor end of tRNA(Ala). Also edits incorrectly charged Ser-tRNA(Ala) and Gly-tRNA(Ala) via its editing domain. The sequence is that of Alanine--tRNA ligase from Chlorobaculum tepidum (strain ATCC 49652 / DSM 12025 / NBRC 103806 / TLS) (Chlorobium tepidum).